The following is a 423-amino-acid chain: MIIKKPKGTYDLLFDEISQWQELEKKVKFFFENYNYLEIRTPIIEYNEIFNRTATHSDMVNKEIYNFYDKKGRLIALRPEGTAGVVRSYIENKLDFNENLNKFYYLGSFFRYERPQKGRYRQFHQIGVEVLGDNTPFLDLEVIATVSEMLIFLGLKDFKIIINTLGDESSYKKYIKVFNDYIKKQDIFLCSLCKERLKKNSLRILDCKTCAQKNFLKSVPLITDYLNDFSKQRFDSVIKGLKFMKINFQICPHLVRGLDYYNHTVFEIILNSDSIGKRNSLGGGGCYDRLVEILGGHKTSGIGFALGTERLISVLKKYDLLEYSNNNQIDVYFLFLDSKLFFKSLFLVNQLRNAGIKTEINYRFLPFLKQLKKALKYNPKYFVILGEKEDKNNEISIKNTINQNQKKLSQLEMIKFLKKELDL.

The protein belongs to the class-II aminoacyl-tRNA synthetase family. In terms of assembly, homodimer.

It is found in the cytoplasm. The enzyme catalyses tRNA(His) + L-histidine + ATP = L-histidyl-tRNA(His) + AMP + diphosphate + H(+). This chain is Histidine--tRNA ligase, found in Phytoplasma mali (strain AT).